The chain runs to 65 residues: Large ribosomal subunit protein bL32 (65 aa).

The protein belongs to the bacterial ribosomal protein bL32 family.

This chain is Large ribosomal subunit protein bL32 (rpmF), found in Rickettsia prowazekii (strain Madrid E).